The primary structure comprises 943 residues: Isoleucine--tRNA ligase 1 (943 aa).

A 'HIGH' region motif is present at residues 58–68 (PYANGTIHIGH). Glu567 contacts L-isoleucyl-5'-AMP. Residues 608–612 (KMSKS) carry the 'KMSKS' region motif. Lys611 is an ATP binding site. The Zn(2+) site is built by Cys906, Cys909, Cys926, and Cys929.

This sequence belongs to the class-I aminoacyl-tRNA synthetase family. IleS type 1 subfamily. In terms of assembly, monomer. It depends on Zn(2+) as a cofactor.

It is found in the cytoplasm. The enzyme catalyses tRNA(Ile) + L-isoleucine + ATP = L-isoleucyl-tRNA(Ile) + AMP + diphosphate. Functionally, catalyzes the attachment of isoleucine to tRNA(Ile). As IleRS can inadvertently accommodate and process structurally similar amino acids such as valine, to avoid such errors it has two additional distinct tRNA(Ile)-dependent editing activities. One activity is designated as 'pretransfer' editing and involves the hydrolysis of activated Val-AMP. The other activity is designated 'posttransfer' editing and involves deacylation of mischarged Val-tRNA(Ile). Its function is as follows. Confers resistance to the antibiotic mupirocin (pseudomonic acid A), an Ile-analog produced by P.fluorescens NCIMB 10586 itself that competitively inhibits activation by Ile-tRNA synthetase, thus inhibiting protein biosynthesis. The polypeptide is Isoleucine--tRNA ligase 1 (ileS1) (Pseudomonas fluorescens).